Consider the following 87-residue polypeptide: Probable Fe(2+)-trafficking protein (87 aa).

This sequence belongs to the Fe(2+)-trafficking protein family. Monomer.

Could be a mediator in iron transactions between iron acquisition and iron-requiring processes, such as synthesis and/or repair of Fe-S clusters in biosynthetic enzymes. The chain is Probable Fe(2+)-trafficking protein from Buchnera aphidicola subsp. Baizongia pistaciae (strain Bp).